The chain runs to 523 residues: Carboxypeptidase Y (523 aa).

The first 20 residues, 1 to 20 (MILHTYIILSLLTIFPKAIG), serve as a signal peptide directing secretion. The propeptide occupies 21–107 (LSLQMPMALE…QELPNYRLRV (87 aa)). 5 cysteine pairs are disulfide-bonded: Cys162/Cys401, Cys296/Cys310, Cys320/Cys343, Cys327/Cys336, and Cys365/Cys371. N-linked (GlcNAc...) asparagine glycosylation is present at Asn193. Ser249 is a catalytic residue. A glycan (N-linked (GlcNAc...) asparagine) is linked at Asn271. Asp441 is an active-site residue. Asn484 and Asn487 each carry an N-linked (GlcNAc...) asparagine glycan. His498 is an active-site residue.

The protein belongs to the peptidase S10 family.

The protein localises to the vacuole. It catalyses the reaction Release of a C-terminal amino acid with broad specificity.. Functionally, involved in degradation of small peptides. The protein is Carboxypeptidase Y (PRC1) of Komagataella phaffii (strain GS115 / ATCC 20864) (Yeast).